The sequence spans 126 residues: Protein ApaG (126 aa).

The region spanning 2–126 is the ApaG domain; sequence SDTQHQVNVR…FRLAVPGALH (125 aa).

This chain is Protein ApaG, found in Pseudomonas paraeruginosa (strain DSM 24068 / PA7) (Pseudomonas aeruginosa (strain PA7)).